The following is a 197-amino-acid chain: ATP-dependent Clp protease proteolytic subunit 1 (197 aa).

Ser88 acts as the Nucleophile in catalysis. Residue His113 is part of the active site.

It belongs to the peptidase S14 family. In terms of assembly, fourteen ClpP subunits assemble into 2 heptameric rings which stack back to back to give a disk-like structure with a central cavity, resembling the structure of eukaryotic proteasomes.

It localises to the cytoplasm. The enzyme catalyses Hydrolysis of proteins to small peptides in the presence of ATP and magnesium. alpha-casein is the usual test substrate. In the absence of ATP, only oligopeptides shorter than five residues are hydrolyzed (such as succinyl-Leu-Tyr-|-NHMec, and Leu-Tyr-Leu-|-Tyr-Trp, in which cleavage of the -Tyr-|-Leu- and -Tyr-|-Trp bonds also occurs).. In terms of biological role, cleaves peptides in various proteins in a process that requires ATP hydrolysis. Has a chymotrypsin-like activity. Plays a major role in the degradation of misfolded proteins. This Leifsonia xyli subsp. xyli (strain CTCB07) protein is ATP-dependent Clp protease proteolytic subunit 1.